An 81-amino-acid chain; its full sequence is UPF0349 protein SE_0633 (81 aa).

Belongs to the UPF0349 family.

The sequence is that of UPF0349 protein SE_0633 from Staphylococcus epidermidis (strain ATCC 12228 / FDA PCI 1200).